The chain runs to 783 residues: MAPNLSKAKDDLIGDVVAVDGLIKPPRFTLKGKDLAVDGHPFLLDVPANIRLTPASTLVPNSDVPAAAAGSFLGFDAPAAKDRHVVPIGKLRDTRFMSIFRFKVWWTTHWVGTNGRDVENETQMMILDQSGTKSSPTGPRPYVLLLPIVEGPFRACLESGKAEDYVHMVLESGSSTVRGSVFRSAVYLHAGDDPFDLVKDAMRVVRAHLGTFRLMEEKTPPPIVDKFGWCTWDAFYLKVHPEGVWEGVRRLADGGCPPGLVLIDDGWQSICHDDDDLGSGAEGMNRTSAGEQMPCRLIKFQENYKFREYKGGMGGFVREMKAAFPTVEQVYVWHALCGYWGGLRPGAPGLPPAKVVAPRLSPGLQRTMEDLAVDKIVNNGVGLVDPRRARELYEGLHSHLQASGIDGVKVDVIHLLEMVCEEYGGRVELAKAYFAGLTESVRRHFNGNGVIASMEHCNDFMLLGTEAVALGRVGDDFWCTDPSGDPDGTFWLQGCHMVHCAYNSLWMGAFIHPDWDMFQSTHPCAAFHAASRAVSGGPVYVSDAVGCHDFDLLRRLALPDGTILRCERYALPTRDCLFADPLHDGKTMLKIWNVNKFSGVLGAFNCQGGGWSREARRNMCAAGFSVPVTARASPADVEWSHGGGGGDRFAVYFVEARKLQLLRRDESVELTLEPFTYELLVVAPVRAIVSPELGIGFAPIGLANMLNAGGAVQGFEAARKDGDVAAEVAVKGAGEMVAYSSARPRLCKVNGQDAEFKYEDGIVTVDVPWTGSSKKLSRVEYFY.

This sequence belongs to the glycosyl hydrolases 36 family.

The enzyme catalyses alpha-D-galactosyl-(1-&gt;3)-1D-myo-inositol + sucrose = raffinose + myo-inositol. Its activity is regulated as follows. Inhibited by Ag(2)+, Hg(2+), Zn(2+), p-chloromercuribenzoate (pCMB) and 1-deoxygalactonojirimycin. Its function is as follows. Transglycosidase operating by a ping-pong reaction mechanism. Involved in the synthesis of raffinose, a major soluble carbohydrate in seeds, roots and tubers. Specific for galactinol and p-nitrophenyl-alpha-D-galactoside as galactosyl donors. Able to utilize sucrose, lactose, 4-beta-galactobiose, N-acetyl-D-lactosamine, trehalose and lacto-N-biose as acceptors. May also act as a glycoside hydrolase. In Oryza sativa subsp. japonica (Rice), this protein is Galactinol--sucrose galactosyltransferase (RFS).